The primary structure comprises 416 residues: Tumor necrosis factor receptor superfamily member 16 (416 aa).

Positions 1 to 19 (MAGFVPLLLLLLPAGPTWG) are cleaved as a signal peptide. TNFR-Cys repeat units follow at residues 23-57 (KCLT…TVCE), 58-99 (PCLD…DAVC), 100-138 (RCAY…DTVC), and 140-180 (ECPE…DAEC). 12 cysteine pairs are disulfide-bonded: Cys-24-Cys-35, Cys-36-Cys-49, Cys-39-Cys-56, Cys-59-Cys-75, Cys-78-Cys-91, Cys-81-Cys-99, Cys-101-Cys-114, Cys-117-Cys-130, Cys-120-Cys-138, Cys-141-Cys-156, Cys-159-Cys-172, and Cys-162-Cys-180. At 29–239 (YTTSGECCKA…PVVSRGTADN (211 aa)) the chain is on the extracellular side. Asn-52 is a glycosylation site (N-linked (GlcNAc...) asparagine). The helical transmembrane segment at 240 to 261 (LIPVYCSILAAVVVGLVAYIAF) threads the bilayer. Residues 262–416 (KRWNSCKQNK…YSESTATSPV (155 aa)) lie on the Cytoplasmic side of the membrane. Polar residues-rich tracts occupy residues 270-284 (NKQG…QTPS) and 294-315 (SGIS…STQG). Residues 270–328 (NKQGANNRPVNQTPSPEGEKLHSDSGISVDSQSLHDQQPPNQSTQGPAPKGDGSLYASL) form a disordered region. The Death domain occupies 333–410 (QEEVEKLLSS…DIAESLYSES (78 aa)).

As to quaternary structure, homodimer; disulfide-linked. Heterodimer with SORCS2. The extracellular domains of the heterodimer bind NGF. Post-translationally, N- and O-glycosylated. Phosphorylated on serine residues. As to expression, detected in embryonic dorsal root ganglion and retina.

It is found in the cell membrane. It localises to the perikaryon. The protein localises to the cell projection. Its subcellular location is the growth cone. The protein resides in the dendritic spine. Functionally, low affinity receptor which can bind to NGF, BDNF, NTF3, and NTF4. Forms a heterodimeric receptor with SORCS2 that binds the precursor forms of NGF, BDNF and NTF3 with high affinity, and has much lower affinity for mature NGF and BDNF. Plays an important role in differentiation and survival of specific neuronal populations during development. Can mediate cell survival as well as cell death of neural cells. Plays a role in the inactivation of RHOA. Necessary for the circadian oscillation of clock genes in the suprachiasmatic nucleus (SCmgetaN) of the brain and in liver and of the genes involved in glucose and lipid metabolism in the liver. This chain is Tumor necrosis factor receptor superfamily member 16 (NGFR), found in Gallus gallus (Chicken).